Here is a 211-residue protein sequence, read N- to C-terminus: Probable GTP-binding protein EngB (211 aa).

In terms of domain architecture, EngB-type G spans 30 to 204 (EGFEVAFAGR…YTVLAGWMEL (175 aa)). GTP contacts are provided by residues 38 to 45 (GRSNAGKS), 64 to 68 (GRTQL), 82 to 85 (DLPG), 149 to 152 (TKAD), and 182 to 185 (LFSA). Residues Ser45 and Thr66 each contribute to the Mg(2+) site.

The protein belongs to the TRAFAC class TrmE-Era-EngA-EngB-Septin-like GTPase superfamily. EngB GTPase family. Mg(2+) is required as a cofactor.

In terms of biological role, necessary for normal cell division and for the maintenance of normal septation. This Pseudomonas syringae pv. tomato (strain ATCC BAA-871 / DC3000) protein is Probable GTP-binding protein EngB.